Reading from the N-terminus, the 142-residue chain is MIKKNKEELNDMEYLVTQENGTEPPFQNEYWNHFEKGIYVDKLSGKPLFTSEDKFESNCGWPSFSKALNDDEIVELVDKSFGMIRTEVRSEKANSHLGHVFNDGPKEKGGLRYCINSAAIQFIPYDKLEELGYGDLIKHFKK.

The MsrB domain maps to 2-125; sequence IKKNKEELND…NSAAIQFIPY (124 aa). The active-site Nucleophile is the C114.

Belongs to the MsrB Met sulfoxide reductase family.

It catalyses the reaction L-methionyl-[protein] + [thioredoxin]-disulfide + H2O = L-methionyl-(R)-S-oxide-[protein] + [thioredoxin]-dithiol. The protein is Peptide methionine sulfoxide reductase MsrB of Staphylococcus epidermidis (strain ATCC 35984 / DSM 28319 / BCRC 17069 / CCUG 31568 / BM 3577 / RP62A).